Reading from the N-terminus, the 89-residue chain is Small ribosomal subunit protein uS15 (89 aa).

The segment at 1–23 is disordered; that stretch reads MTLNTQEKQKLINTHQNHGTDTG.

The protein belongs to the universal ribosomal protein uS15 family. Part of the 30S ribosomal subunit. Forms a bridge to the 50S subunit in the 70S ribosome, contacting the 23S rRNA.

In terms of biological role, one of the primary rRNA binding proteins, it binds directly to 16S rRNA where it helps nucleate assembly of the platform of the 30S subunit by binding and bridging several RNA helices of the 16S rRNA. Forms an intersubunit bridge (bridge B4) with the 23S rRNA of the 50S subunit in the ribosome. The chain is Small ribosomal subunit protein uS15 from Prochlorococcus marinus (strain MIT 9211).